Here is an 81-residue protein sequence, read N- to C-terminus: uncharacterized protein (81 aa).

Positions 1–31 (MRYNSFLSVLALFNVLLWFTFILAISMTFSA) are cleaved as a signal peptide. The helical transmembrane segment at 52–74 (WFFVLLPYVIGLFFAIFDSATIG) threads the bilayer.

The protein localises to the membrane. This is an uncharacterized protein from Pasteurella multocida (strain Pm70).